Here is a 134-residue protein sequence, read N- to C-terminus: Transcription antitermination protein NusB (134 aa).

The protein belongs to the NusB family.

In terms of biological role, involved in transcription antitermination. Required for transcription of ribosomal RNA (rRNA) genes. Binds specifically to the boxA antiterminator sequence of the ribosomal RNA (rrn) operons. The protein is Transcription antitermination protein NusB of Shewanella baltica (strain OS223).